The chain runs to 142 residues: Small ribosomal subunit protein uS12 (142 aa).

Residues 1-44 (MANGKYAARKLKQDRQKHRWSDSDYARRARGLGKKSDPLEGAPQ) form a disordered region. Basic and acidic residues predominate over residues 11 to 27 (LKQDRQKHRWSDSDYAR).

This sequence belongs to the universal ribosomal protein uS12 family. In terms of assembly, part of the 30S ribosomal subunit.

With S4 and S5 plays an important role in translational accuracy. Located at the interface of the 30S and 50S subunits. In Natronomonas pharaonis (strain ATCC 35678 / DSM 2160 / CIP 103997 / JCM 8858 / NBRC 14720 / NCIMB 2260 / Gabara) (Halobacterium pharaonis), this protein is Small ribosomal subunit protein uS12.